Reading from the N-terminus, the 294-residue chain is MNTAYIGRFAPTPSGYLHFGSLVAALASYLDARAVGGRWLLRMEDLDPPREIPGAQDAILRTLETYGFEWDGELVRQSERHAEYAAVIARLLSQGLAYACTCSRKQLEGYAGIYPGFCRNACHPDHDAAIRLRVPELDYHFIDRVQGEFRQHLGREVGDFVIRRRDGLFAYQLAVVLDDAWQGVTDVVRGADLLDSTPRQLYLQELLGLPQPRYLHVPLIIQPDGHKLGKSYRSPPLPADQAGPLLLRALRALGQQPPTELQGAAPAELLSWGRANWDAMRIPRSRTLAEAQLR.

Residues 8–12 and glutamate 44 each bind L-glutamate; that span reads RFAPT. Positions 11 to 21 match the 'HIGH' region motif; sequence PTPSGYLHFGS. Cysteine 100, cysteine 102, tyrosine 114, and cysteine 118 together coordinate Zn(2+). L-glutamate-binding residues include tyrosine 171 and arginine 189. Positions 227–231 match the 'KMSKS' region motif; the sequence is KLGKS. Lysine 230 lines the ATP pocket.

This sequence belongs to the class-I aminoacyl-tRNA synthetase family. GluQ subfamily. Zn(2+) is required as a cofactor.

In terms of biological role, catalyzes the tRNA-independent activation of glutamate in presence of ATP and the subsequent transfer of glutamate onto a tRNA(Asp). Glutamate is transferred on the 2-amino-5-(4,5-dihydroxy-2-cyclopenten-1-yl) moiety of the queuosine in the wobble position of the QUC anticodon. The polypeptide is Glutamyl-Q tRNA(Asp) synthetase (Ectopseudomonas mendocina (strain ymp) (Pseudomonas mendocina)).